We begin with the raw amino-acid sequence, 269 residues long: Probable aquaporin TIP5-1 (269 aa).

Helical transmembrane passes span 19-39, 54-74, 84-104, 139-159, and 177-197; these read AYFAEFFSTFLFVFIAVGSTI, SLMATAVAQAFGLFAAVFIAA, AVTFAYAIGGHITVPSAIFYW, FGAGILEGVLTFMVVYTVHVA, and ALGALVVGAVTGACVLAAGSL. An NPA 1 motif is present at residues 82 to 84; that stretch reads NPA. The NPA 2 motif lies at 203-205; that stretch reads NPA. A helical transmembrane segment spans residues 223–243; the sequence is YWAGPMVGAAVAALVHQALVF.

The protein belongs to the MIP/aquaporin (TC 1.A.8) family. TIP (TC 1.A.8.10) subfamily. In terms of tissue distribution, expressed in leaves and anthers, and at lower levels in roots.

It localises to the vacuole membrane. Functionally, aquaporins facilitate the transport of water and small neutral solutes across cell membranes. May be involved in transport from the vacuolar compartment to the cytoplasm. The protein is Probable aquaporin TIP5-1 (TIP5;1) of Oryza sativa subsp. japonica (Rice).